Reading from the N-terminus, the 158-residue chain is Regulator of sigma D (158 aa).

The protein belongs to the Rsd/AlgQ family. As to quaternary structure, interacts with RpoD.

The protein resides in the cytoplasm. Functionally, binds RpoD and negatively regulates RpoD-mediated transcription activation by preventing the interaction between the primary sigma factor RpoD with the catalytic core of the RNA polymerase and with promoter DNA. May be involved in replacement of the RNA polymerase sigma subunit from RpoD to RpoS during the transition from exponential growth to the stationary phase. This is Regulator of sigma D from Escherichia coli O127:H6 (strain E2348/69 / EPEC).